The chain runs to 1413 residues: DNA-directed RNA polymerase subunit beta' (1413 aa).

Residues Cys70, Cys72, Cys85, and Cys88 each coordinate Zn(2+). Asp460, Asp462, and Asp464 together coordinate Mg(2+). Residues Cys819, Cys893, Cys900, and Cys903 each contribute to the Zn(2+) site. Positions 1392–1413 (EEAFDFGTPSAPAEEPQHPAAE) are disordered.

This sequence belongs to the RNA polymerase beta' chain family. In terms of assembly, the RNAP catalytic core consists of 2 alpha, 1 beta, 1 beta' and 1 omega subunit. When a sigma factor is associated with the core the holoenzyme is formed, which can initiate transcription. It depends on Mg(2+) as a cofactor. Zn(2+) is required as a cofactor.

The catalysed reaction is RNA(n) + a ribonucleoside 5'-triphosphate = RNA(n+1) + diphosphate. DNA-dependent RNA polymerase catalyzes the transcription of DNA into RNA using the four ribonucleoside triphosphates as substrates. In Burkholderia orbicola (strain MC0-3), this protein is DNA-directed RNA polymerase subunit beta'.